Here is a 222-residue protein sequence, read N- to C-terminus: MNVAILLAAGKGERMSENVPKQFLEIEGRMLFEYPLSTFLKSEAIDGVVIVTRREWFEVVEKRVFHEKVLGIVEGGDTRSQSVRSALEFLEKFSPSYVLVHDSARPFLRKKHVSEVLRRARETGAATLALKNSDALVRVENDRMEYIPRKGVYRILTPQAFSYEILKKAHENGGEWADDTEPVQKLGVKIALVEGDPLCFKVTFKEDLELARIIAREWERIP.

It belongs to the IspD/TarI cytidylyltransferase family. IspD subfamily.

The catalysed reaction is 2-C-methyl-D-erythritol 4-phosphate + CTP + H(+) = 4-CDP-2-C-methyl-D-erythritol + diphosphate. It functions in the pathway isoprenoid biosynthesis; isopentenyl diphosphate biosynthesis via DXP pathway; isopentenyl diphosphate from 1-deoxy-D-xylulose 5-phosphate: step 2/6. In terms of biological role, catalyzes the formation of 4-diphosphocytidyl-2-C-methyl-D-erythritol from CTP and 2-C-methyl-D-erythritol 4-phosphate (MEP). In Thermotoga petrophila (strain ATCC BAA-488 / DSM 13995 / JCM 10881 / RKU-1), this protein is 2-C-methyl-D-erythritol 4-phosphate cytidylyltransferase.